Here is a 51-residue protein sequence, read N- to C-terminus: Cyclic phosphodiesterase (51 aa).

His-11 functions as the Proton donor/acceptor in the catalytic mechanism. Substrate is bound at residue Thr-13. His-38 functions as the Proton donor/acceptor in the catalytic mechanism. 2 residues coordinate substrate: Ser-40 and Tyr-43.

This sequence belongs to the 2H phosphoesterase superfamily. CPD1 family.

Functionally, hydrolyzes ADP-ribose 1'',2''-cyclic phosphate (Appr&gt;1) that is produced during tRNA splicing into ADP-ribose 1''-phosphate (Appr-1''p). This Triticum aestivum (Wheat) protein is Cyclic phosphodiesterase.